The primary structure comprises 422 residues: Phosphoribosylamine--glycine ligase (422 aa).

An ATP-grasp domain is found at 107–312 (KEVMAAAGVR…LGQLLYAAGT (206 aa)). 138–193 (PPVGDLSWVVKDDRLAAGKGVVVTSDRDVARTHAAGLLEAGHPVLLESYLDGPEVS) lines the ATP pocket. Mg(2+)-binding residues include E282 and N284.

The protein belongs to the GARS family. Requires Mg(2+) as cofactor. Mn(2+) is required as a cofactor.

It catalyses the reaction 5-phospho-beta-D-ribosylamine + glycine + ATP = N(1)-(5-phospho-beta-D-ribosyl)glycinamide + ADP + phosphate + H(+). Its pathway is purine metabolism; IMP biosynthesis via de novo pathway; N(1)-(5-phospho-D-ribosyl)glycinamide from 5-phospho-alpha-D-ribose 1-diphosphate: step 2/2. In Mycobacterium leprae (strain TN), this protein is Phosphoribosylamine--glycine ligase.